A 637-amino-acid chain; its full sequence is Transmembrane 9 superfamily member 10 (637 aa).

Residues 1-23 form the signal peptide; it reads MAKVRILIFTLVLFFSLNVHIHG. At 24-274 the chain is on the lumenal side; sequence FYLPGVAPQD…YLLMADDQIH (251 aa). The chain crosses the membrane as a helical span at residues 275 to 295; sequence WFSIVNSMMIVLFLSGMVAMI. The Cytoplasmic portion of the chain corresponds to 296 to 344; the sequence is MLRTLYRDISNYNQLESHEEALEETGWKLVHGDVFRPPTNPELLCVYAG. Residues 345 to 365 traverse the membrane as a helical segment; it reads TGVQCFGMILVTMIFACLGFL. The Lumenal segment spans residues 366 to 370; it reads SPSNR. Residues 371–391 form a helical membrane-spanning segment; it reads GGLMTAMLLLWVFMGLLAGYA. Topologically, residues 392 to 411 are cytoplasmic; the sequence is SSRLYKTLRGTEWKRNALKT. Residues 412–432 form a helical membrane-spanning segment; the sequence is AFMFPATVFVAFFVLNAIIWG. The Lumenal segment spans residues 433–444; it reads QKSSGAVPFGTM. The helical transmembrane segment at 445–465 threads the bilayer; sequence FALVVLWFGISVPLVFIGGYI. Residues 466-494 lie on the Cytoplasmic side of the membrane; the sequence is GFRKPAPEDPVKTNKIPRQIPTQAWYMNP. Residues 495 to 515 form a helical membrane-spanning segment; the sequence is IFSILIGGILPFGAVFIELFF. Topologically, residues 516 to 527 are lumenal; sequence ILTSIWLHQFYY. The helical transmembrane segment at 528–548 threads the bilayer; it reads IFGFLFIVFIILIITCAEITV. Topologically, residues 549-566 are cytoplasmic; that stretch reads VLCYFQLCSEDYQWWWRS. A helical membrane pass occupies residues 567–587; it reads YLTSGSSAVYLFLYAVFYFYT. The Lumenal portion of the chain corresponds to 588-593; that stretch reads KLEITK. The helical transmembrane segment at 594–614 threads the bilayer; sequence LVSAVLYFGYMLIVSYVFFVF. Residues 615–637 are Cytoplasmic-facing; the sequence is TGAIGFYACFWFTRLIYSSVKID. The Endoplasmic reticulum export signal signature appears at 626 to 631; it reads FTRLIY. The Golgi retention signal motif lies at 635-637; the sequence is KID.

The protein belongs to the nonaspanin (TM9SF) (TC 9.A.2) family.

The protein localises to the endosome membrane. Its subcellular location is the golgi apparatus membrane. In Arabidopsis thaliana (Mouse-ear cress), this protein is Transmembrane 9 superfamily member 10.